The chain runs to 318 residues: Death effector domain-containing protein (318 aa).

Residues 25-103 (SLHRMFDIVG…RHDLLPYVTL (79 aa)) enclose the DED domain. A disordered region spans residues 128–191 (PRALSDPEPR…SVTPDPKEKQ (64 aa)).

In terms of assembly, interacts with CASP8, CASP10, KRT8, KRT18, CASP3 and FADD. Homodimerizes and heterodimerizes with DEDD2. In terms of processing, exists predominantly in a mono- or diubiquitinated form. As to expression, ubiquitously expressed.

Its subcellular location is the cytoplasm. It is found in the nucleus. It localises to the nucleolus. A scaffold protein that directs CASP3 to certain substrates and facilitates their ordered degradation during apoptosis. May also play a role in mediating CASP3 cleavage of KRT18. Regulates degradation of intermediate filaments during apoptosis. May play a role in the general transcription machinery in the nucleus and might be an important regulator of the activity of GTF3C3. Inhibits DNA transcription in vitro. This is Death effector domain-containing protein (Dedd) from Mus musculus (Mouse).